Reading from the N-terminus, the 462-residue chain is Toxin CqTX-A (462 aa).

Positions 1–19 (MANMLYFSLLALLFMTGIA) are cleaved as a signal peptide. Asn-174 carries N-linked (GlcNAc...) asparagine glycosylation.

Belongs to the jellyfish toxin family. Type I subfamily. Post-translationally, contains disulfide bonds. N-glycosylated.

The protein localises to the secreted. It is found in the nematocyst. Its subcellular location is the target cell membrane. Its function is as follows. Critical allergen and main toxic protein of C.quadrigatus venom. Has potent hemolytic activity. Is lethal to crayfish. Causes cutaneous inflammation in humans. May act as a pore-forming toxin, disrupting normal transmembrane ion concentration gradients in susceptible cells. This Chiropsoides quadrigatus (Box jellyfish) protein is Toxin CqTX-A.